Reading from the N-terminus, the 808-residue chain is Aminotransferase ALT4 (808 aa).

The protein belongs to the class-II pyridoxal-phosphate-dependent aminotransferase family. BioF subfamily. Pyridoxal 5'-phosphate is required as a cofactor.

The protein operates within mycotoxin biosynthesis. Aminotransferase; part of the gene cluster that mediates the biosynthesis of the host-selective toxins (HSTs) AAL-toxins, sphinganine-analog mycotoxins responsible for Alternaria stem canker on tomato by the tomato pathotype. The biosynthesis starts with the polyketide synthase ALT1-catalyzed C-16 carbon chain assembly from one starter acetyl-CoA unit with malonyl-CoA extender units. ALT1 also selectively transfers methyl groups at the first and the third cycle of chain elongation for AAL toxin. The C-16 polyketide chain is released from the enzyme by a nucleophilic attack of a carbanion, which is derived from R-carbon of glycin by decarboxylation, on the carbonyl carbon of polyketide acyl chain. This step is probably catalyzed by a pyridoxal 5'-phosphate-dependent aminoacyl transferase ALT4. The respective functions of the other enzymes encoded by the cluster have still to be elucidated. The sphingosine N-acyltransferase-like protein ALT7 seems not to act as a resistance/self-tolerance factor against the toxin in the toxin biosynthetic gene cluster, contrary to what is expected. The sequence is that of Aminotransferase ALT4 from Alternaria alternata (Alternaria rot fungus).